Consider the following 450-residue polypeptide: Divalent metal cation transporter MntH (450 aa).

11 consecutive transmembrane segments (helical) span residues 34-54 (LSFL…GNWI), 59-81 (GGAQ…AMLL), 108-128 (IAII…IAEV), 141-161 (IPLI…LFIM), 170-190 (AIVG…VYIS), 212-232 (GILY…NLYL), 263-283 (IQLS…ASLF), 305-325 (PVLG…ALLA), 361-381 (SLAV…AAKI), 383-403 (QLLV…LIPL), and 422-442 (VNII…YLIV).

The protein belongs to the NRAMP family.

The protein localises to the cell membrane. Functionally, h(+)-stimulated, divalent metal cation uptake system. The sequence is that of Divalent metal cation transporter MntH from Staphylococcus aureus (strain MRSA252).